The chain runs to 141 residues: Protein E6 (141 aa).

Zinc fingers lie at residues 27 to 64 (CRFCNRFLAYIELVAFDLKGLQLIWTEEDFVFACCSSC) and 101 to 137 (CKFCLKKLDLLEKLDTCYRHQQFHKVRRNWKGLCRHC).

The protein belongs to the papillomaviridae E6 protein family. Forms homodimers. Interacts with ubiquitin-protein ligase UBE3A/E6-AP; this interaction stimulates UBE3A ubiquitin activity. Interacts with host BAK1.

It is found in the host cytoplasm. It localises to the host nucleus. Plays a major role in the induction and maintenance of cellular transformation. E6 associates with host UBE3A/E6-AP ubiquitin-protein ligase and modulates its activity. Protects host keratinocytes from apoptosis by mediating the degradation of host BAK1. May also inhibit host immune response. In Human papillomavirus 17, this protein is Protein E6.